The primary structure comprises 368 residues: Cytochrome-c peroxidase IdrP2 (368 aa).

An N-terminal signal peptide occupies residues 1–27 (MKWHRGRLTQTLGAMGLTATLTVAAQA). 2 Cytochrome c domains span residues 48–158 (AMIE…ALWQ) and 201–346 (KEAQ…LTLS). Residues Cys70, Cys73, His74, Cys216, Cys219, and His220 each contribute to the heme c site.

The iodate reductase (Idr) complex is composed of a molybdopterin-dependent iodate reductase (IdrA and IdrB subunits) and two associated peroxidases (IdrP1 and IdrP2). Heme c is required as a cofactor.

The protein resides in the periplasm. The catalysed reaction is 2 Fe(II)-[cytochrome c] + H2O2 + 2 H(+) = 2 Fe(III)-[cytochrome c] + 2 H2O. In terms of biological role, involved in iodate respiration. Probably reduces the H(2)O(2) produced by IdrA/IdrB to H(2)O, using a reduced cytochrome c as the electron donor. The polypeptide is Cytochrome-c peroxidase IdrP2 (Pseudomonas sp. (strain SCT)).